We begin with the raw amino-acid sequence, 89 residues long: Small ribosomal subunit protein uS15 (89 aa).

Belongs to the universal ribosomal protein uS15 family. Part of the 30S ribosomal subunit. Forms a bridge to the 50S subunit in the 70S ribosome, contacting the 23S rRNA.

In terms of biological role, one of the primary rRNA binding proteins, it binds directly to 16S rRNA where it helps nucleate assembly of the platform of the 30S subunit by binding and bridging several RNA helices of the 16S rRNA. Functionally, forms an intersubunit bridge (bridge B4) with the 23S rRNA of the 50S subunit in the ribosome. The polypeptide is Small ribosomal subunit protein uS15 (Pelodictyon phaeoclathratiforme (strain DSM 5477 / BU-1)).